The primary structure comprises 470 residues: Cell division protein FtsP (470 aa).

Residues 1–29 (MKNCSRRQLLKTTLFSTALFSVPAPLLAA) constitute a signal peptide (tat-type signal).

This sequence belongs to the FtsP family. Post-translationally, predicted to be exported by the Tat system. The position of the signal peptide cleavage has not been experimentally proven.

It localises to the periplasm. Its function is as follows. Cell division protein that is required for growth during stress conditions. May be involved in protecting or stabilizing the divisomal assembly under conditions of stress. This Aggregatibacter aphrophilus (strain NJ8700) (Haemophilus aphrophilus) protein is Cell division protein FtsP.